A 231-amino-acid polypeptide reads, in one-letter code: Quercetin 2,3-dioxygenase (231 aa).

Positions 57, 59, 101, and 103 each coordinate a divalent metal cation.

The protein belongs to the pirin family. Zn(2+) serves as cofactor. The cofactor is Co(2+). It depends on Fe(2+) as a cofactor.

The catalysed reaction is quercetin + O2 = 2-(3,4-dihydroxybenzoyloxy)-4,6-dihydroxybenzoate + CO. It participates in flavonoid metabolism; quercetin degradation. Functionally, has quercetin 2,3-dioxygenase activity in vitro. Its physiological role is unknown; however, may provide a mechanism that would avoid inhibition of key cellular proteins, such as DNA gyrase, by quercetin. This Escherichia coli O157:H7 protein is Quercetin 2,3-dioxygenase (yhhW).